The following is a 178-amino-acid chain: Large ribosomal subunit protein uL6 (178 aa).

This sequence belongs to the universal ribosomal protein uL6 family. Part of the 50S ribosomal subunit.

In terms of biological role, this protein binds to the 23S rRNA, and is important in its secondary structure. It is located near the subunit interface in the base of the L7/L12 stalk, and near the tRNA binding site of the peptidyltransferase center. The sequence is that of Large ribosomal subunit protein uL6 from Helicobacter pylori (strain J99 / ATCC 700824) (Campylobacter pylori J99).